Consider the following 101-residue polypeptide: uncharacterized protein (101 aa).

Transmembrane regions (helical) follow at residues K20–L40, G59–A79, and S81–F101.

Its subcellular location is the endoplasmic reticulum. The protein resides in the membrane. This is an uncharacterized protein from Saccharomyces cerevisiae (strain ATCC 204508 / S288c) (Baker's yeast).